We begin with the raw amino-acid sequence, 285 residues long: Phosphatidate cytidylyltransferase (285 aa).

The next 8 helical transmembrane spans lie at 10–30 (FVLI…GFAI), 56–76 (VWLA…LPEY), 93–113 (LGWW…AAIW), 121–141 (LIFG…LRAW), 151–171 (AIWL…AYMF), 190–210 (WQGF…YGMW), 213–233 (LDVA…ASVL), and 264–284 (IDSL…VFRT).

It belongs to the CDS family.

The protein resides in the cell inner membrane. It catalyses the reaction a 1,2-diacyl-sn-glycero-3-phosphate + CTP + H(+) = a CDP-1,2-diacyl-sn-glycerol + diphosphate. It functions in the pathway phospholipid metabolism; CDP-diacylglycerol biosynthesis; CDP-diacylglycerol from sn-glycerol 3-phosphate: step 3/3. The polypeptide is Phosphatidate cytidylyltransferase (cdsA) (Escherichia coli O157:H7).